Here is a 450-residue protein sequence, read N- to C-terminus: Tubulin alpha-1 chain (450 aa).

GTP is bound by residues Gln-11, Glu-71, Gly-144, Thr-145, Thr-179, Asn-206, and Asn-228. Glu-71 provides a ligand contact to Mg(2+). Glu-254 is a catalytic residue. Thr-349 bears the Phosphothreonine mark. Residues 431–450 (DYEEVGGEGAEDDDEEGDEY) form a disordered region.

It belongs to the tubulin family. As to quaternary structure, dimer of alpha and beta chains. A typical microtubule is a hollow water-filled tube with an outer diameter of 25 nm and an inner diameter of 15 nM. Alpha-beta heterodimers associate head-to-tail to form protofilaments running lengthwise along the microtubule wall with the beta-tubulin subunit facing the microtubule plus end conferring a structural polarity. Microtubules usually have 13 protofilaments but different protofilament numbers can be found in some organisms and specialized cells. It depends on Mg(2+) as a cofactor. Post-translationally, undergoes a tyrosination/detyrosination cycle, the cyclic removal and re-addition of a C-terminal tyrosine residue by the enzymes tubulin tyrosine carboxypeptidase (TTCP) and tubulin tyrosine ligase (TTL), respectively.

It is found in the cytoplasm. The protein resides in the cytoskeleton. The catalysed reaction is GTP + H2O = GDP + phosphate + H(+). In terms of biological role, tubulin is the major constituent of microtubules, a cylinder consisting of laterally associated linear protofilaments composed of alpha- and beta-tubulin heterodimers. Microtubules grow by the addition of GTP-tubulin dimers to the microtubule end, where a stabilizing cap forms. Below the cap, tubulin dimers are in GDP-bound state, owing to GTPase activity of alpha-tubulin. This chain is Tubulin alpha-1 chain (TUBA1), found in Arabidopsis thaliana (Mouse-ear cress).